Reading from the N-terminus, the 236-residue chain is Thylakoid lumenal 17.4 kDa protein, chloroplastic (236 aa).

Pentapeptide repeat domains are found at residues 124–163 and 169–208; these read TNLK…SFKG and AVID…VFED.

In terms of assembly, interacts in vitro with LTO1.

It localises to the plastid. The protein resides in the chloroplast thylakoid lumen. The chain is Thylakoid lumenal 17.4 kDa protein, chloroplastic from Arabidopsis thaliana (Mouse-ear cress).